The primary structure comprises 295 residues: Threonine/homoserine exporter RhtA (295 aa).

At 1–9 (MPGSLRKMP) the chain is on the cytoplasmic side. Residues 10–30 (VWLPIVILLVAMASIQGGASL) traverse the membrane as a helical segment. Positions 30–135 (LAKSLFPLVG…VLAVLGLWFL (106 aa)) constitute an EamA 1 domain. At 31–38 (AKSLFPLV) the chain is on the periplasmic side. The chain crosses the membrane as a helical span at residues 39 to 59 (GAPGVTALRLALGTLILIAFF). The Cytoplasmic portion of the chain corresponds to 60–71 (KPWRLRFAKEQR). Residues 72 to 92 (LPLLFYGVSLGGMNYLFYLSI) form a helical membrane-spanning segment. Glutamine 93 is a topological domain (periplasmic). The helical transmembrane segment at 94–114 (TVPLGIAVALEFTGPLAVALF) threads the bilayer. Topologically, residues 115-118 (SSRR) are cytoplasmic. The helical transmembrane segment at 119–139 (PVDFVWVVLAVLGLWFLLPLG) threads the bilayer. Topologically, residues 140 to 146 (QDVSHVD) are periplasmic. A helical transmembrane segment spans residues 147 to 167 (LTGCALALGAGACWAIYILSG). The 120-residue stretch at 159–278 (CWAIYILSGQ…LGAIIAASMG (120 aa)) folds into the EamA 2 domain. Residues 168–175 (QRAGAEHG) are Cytoplasmic-facing. The chain crosses the membrane as a helical span at residues 176 to 196 (PATVAIGSLIAALIFVPIGAL). The Periplasmic segment spans residues 197 to 200 (QAGE). The helical transmembrane segment at 201-221 (ALWHWSVIPLGLAVAILSTAL) threads the bilayer. Residues 222-237 (PYSLEMIALTRLPTRT) lie on the Cytoplasmic side of the membrane. A helical membrane pass occupies residues 238–258 (FGTLMSMEPALAAVSGMIFLG). At 259 to 262 (ETLT) the chain is on the periplasmic side. Residues 263–283 (PIQLLALGAIIAASMGSTLTV) traverse the membrane as a helical segment. Residues 284-295 (RKESKIKELDIN) are Cytoplasmic-facing.

This sequence belongs to the drug/metabolite transporter (DMT) superfamily. 10 TMS drug/metabolite exporter (DME) (TC 2.A.7.3) family.

The protein localises to the cell inner membrane. In terms of biological role, involved in the efflux of threonine and homoserine. This Escherichia coli O157:H7 protein is Threonine/homoserine exporter RhtA (rhtA).